An 85-amino-acid polypeptide reads, in one-letter code: UPF0291 protein str0508 (85 aa).

A disordered region spans residues 62-85 (TPEKLRQVQREKGLHGRSLDDPES).

Belongs to the UPF0291 family.

It localises to the cytoplasm. The protein is UPF0291 protein str0508 of Streptococcus thermophilus (strain CNRZ 1066).